Here is a 182-residue protein sequence, read N- to C-terminus: Adenine phosphoribosyltransferase (182 aa).

Belongs to the purine/pyrimidine phosphoribosyltransferase family. In terms of assembly, homodimer.

It is found in the cytoplasm. The catalysed reaction is AMP + diphosphate = 5-phospho-alpha-D-ribose 1-diphosphate + adenine. It functions in the pathway purine metabolism; AMP biosynthesis via salvage pathway; AMP from adenine: step 1/1. Functionally, catalyzes a salvage reaction resulting in the formation of AMP, that is energically less costly than de novo synthesis. This Campylobacter fetus subsp. fetus (strain 82-40) protein is Adenine phosphoribosyltransferase.